The primary structure comprises 481 residues: Matrix metalloproteinase-20 (481 aa).

Positions 1–20 (MLPASGLAVLLVTALKFSTA) are cleaved as a signal peptide. The propeptide occupies 21 to 105 (APSLPAASPR…PRCGVPDVAN (85 aa)). N-linked (GlcNAc...) asparagine glycosylation is present at Asn64. The Cysteine switch motif lies at 96–103 (PRCGVPDV). A Zn(2+)-binding site is contributed by Cys98. Ca(2+) is bound by residues Glu162, Ala163, and Asp164. The Zn(2+) site is built by His174 and Asp176. Positions 181, 182, 184, and 186 each coordinate Ca(2+). Zn(2+) is bound at residue His189. Residues Glu195, Gly196, Gly198, and Asp200 each coordinate Ca(2+). Residue His202 participates in Zn(2+) binding. Asp204 and Glu207 together coordinate Ca(2+). His224 is a Zn(2+) binding site. Residue Glu225 is part of the active site. Zn(2+)-binding residues include His228 and His234. Hemopexin repeat units follow at residues 291 to 341 (PDLC…FPQL), 342 to 387 (MSNV…GFPR), 389 to 437 (VQRI…FSGV), and 438 to 481 (NGQI…WIGC). The cysteines at positions 294 and 481 are disulfide-linked. Asn297 carries N-linked (GlcNAc...) asparagine glycosylation.

It belongs to the peptidase M10A family. It depends on Zn(2+) as a cofactor. Ca(2+) serves as cofactor. Post-translationally, autoactivates at least at the 105-Asn-|-Tyr-106 site. Expressed in the enamel organ.

It is found in the secreted. The protein resides in the extracellular space. The protein localises to the extracellular matrix. In terms of biological role, degrades amelogenin, the major protein component of the enamel matrix and two of the macromolecules characterizing the cartilage extracellular matrix: aggrecan and the cartilage oligomeric matrix protein (COMP). May play a central role in tooth enamel formation. Cleaves aggrecan at the '360-Ser-|-Phe-361' site. This chain is Matrix metalloproteinase-20 (MMP20), found in Bos taurus (Bovine).